Reading from the N-terminus, the 165-residue chain is Nucleotide-binding protein Ctha_0558 (165 aa).

The protein belongs to the YajQ family.

In terms of biological role, nucleotide-binding protein. This Chloroherpeton thalassium (strain ATCC 35110 / GB-78) protein is Nucleotide-binding protein Ctha_0558.